The primary structure comprises 258 residues: Ribosomal RNA small subunit methyltransferase A (258 aa).

The S-adenosyl-L-methionine site is built by His-13, Leu-15, Gly-40, Glu-61, Asp-86, and Asn-106.

This sequence belongs to the class I-like SAM-binding methyltransferase superfamily. rRNA adenine N(6)-methyltransferase family. RsmA subfamily.

The protein localises to the cytoplasm. It carries out the reaction adenosine(1518)/adenosine(1519) in 16S rRNA + 4 S-adenosyl-L-methionine = N(6)-dimethyladenosine(1518)/N(6)-dimethyladenosine(1519) in 16S rRNA + 4 S-adenosyl-L-homocysteine + 4 H(+). Its function is as follows. Specifically dimethylates two adjacent adenosines (A1518 and A1519) in the loop of a conserved hairpin near the 3'-end of 16S rRNA in the 30S particle. May play a critical role in biogenesis of 30S subunits. The sequence is that of Ribosomal RNA small subunit methyltransferase A from Coxiella burnetii (strain Dugway 5J108-111).